A 166-amino-acid chain; its full sequence is Phosphopantetheine adenylyltransferase (166 aa).

Position 11 (serine 11) interacts with substrate. ATP-binding positions include 11–12 and histidine 19; that span reads SF. Positions 43, 80, and 94 each coordinate substrate. Residues 95–97, glutamate 105, and 130–136 each bind ATP; these read GLR and VRTITAT.

It belongs to the bacterial CoaD family. In terms of assembly, homohexamer. Mg(2+) serves as cofactor.

The protein resides in the cytoplasm. It carries out the reaction (R)-4'-phosphopantetheine + ATP + H(+) = 3'-dephospho-CoA + diphosphate. It participates in cofactor biosynthesis; coenzyme A biosynthesis; CoA from (R)-pantothenate: step 4/5. Reversibly transfers an adenylyl group from ATP to 4'-phosphopantetheine, yielding dephospho-CoA (dPCoA) and pyrophosphate. The chain is Phosphopantetheine adenylyltransferase from Mesorhizobium japonicum (strain LMG 29417 / CECT 9101 / MAFF 303099) (Mesorhizobium loti (strain MAFF 303099)).